A 253-amino-acid polypeptide reads, in one-letter code: Triosephosphate isomerase, cytosolic (253 aa).

Substrate-binding residues include Asn10 and Lys12. His96 functions as the Electrophile in the catalytic mechanism. Catalysis depends on Glu166, which acts as the Proton acceptor.

It belongs to the triosephosphate isomerase family. In terms of assembly, homodimer.

It localises to the cytoplasm. It carries out the reaction D-glyceraldehyde 3-phosphate = dihydroxyacetone phosphate. It functions in the pathway carbohydrate biosynthesis; gluconeogenesis. Its pathway is carbohydrate degradation; glycolysis; D-glyceraldehyde 3-phosphate from glycerone phosphate: step 1/1. The protein is Triosephosphate isomerase, cytosolic of Secale cereale (Rye).